A 210-amino-acid polypeptide reads, in one-letter code: Putative Dihydrofolate reductase (210 aa).

The DHFR domain maps to 4 to 184 (TLYCVVAVDT…IFYMFETYIK (181 aa)).

It belongs to the dihydrofolate reductase family.

It catalyses the reaction (6S)-5,6,7,8-tetrahydrofolate + NADP(+) = 7,8-dihydrofolate + NADPH + H(+). The chain is Putative Dihydrofolate reductase (ORF2) from Human herpesvirus 8 type P (isolate GK18) (HHV-8).